Here is a 330-residue protein sequence, read N- to C-terminus: Phenylalanine--tRNA ligase alpha subunit (330 aa).

Glu-246 is a binding site for Mg(2+).

It belongs to the class-II aminoacyl-tRNA synthetase family. Phe-tRNA synthetase alpha subunit type 1 subfamily. In terms of assembly, tetramer of two alpha and two beta subunits. The cofactor is Mg(2+).

The protein localises to the cytoplasm. It catalyses the reaction tRNA(Phe) + L-phenylalanine + ATP = L-phenylalanyl-tRNA(Phe) + AMP + diphosphate + H(+). The polypeptide is Phenylalanine--tRNA ligase alpha subunit (Campylobacter jejuni subsp. doylei (strain ATCC BAA-1458 / RM4099 / 269.97)).